Here is an 83-residue protein sequence, read N- to C-terminus: Small ribosomal subunit protein uS17 (83 aa).

The protein belongs to the universal ribosomal protein uS17 family. Part of the 30S ribosomal subunit.

Functionally, one of the primary rRNA binding proteins, it binds specifically to the 5'-end of 16S ribosomal RNA. This Campylobacter concisus (strain 13826) protein is Small ribosomal subunit protein uS17.